We begin with the raw amino-acid sequence, 91 residues long: MNVKKAAAVFSITIPIISAILIINFFTGFMSIPWQGMPVFFPLLLSPIGIILAFVSIKTNKRCAVYGIVLNAIMFPFPFFWFIGGALLFGV.

A run of 3 helical transmembrane segments spans residues 6–26 (AAAVFSITIPIISAILIINFF), 37–57 (MPVFFPLLLSPIGIILAFVSI), and 68–88 (IVLNAIMFPFPFFWFIGGALL).

The protein resides in the cell membrane. This is an uncharacterized protein from Bacillus subtilis (strain 168).